Here is a 1003-residue protein sequence, read N- to C-terminus: MEGQTRSGSARPGTRTGLGPLPGTHGVLQAEIPSKKVNSSFQLPAKNSGPASSEPRLTLAPVGPRAAVSPPSERPRLVLSSPRPVLAPLSIAGEQKRPPPPHSSNRAAKSVGQLVVSAAAASKPPPVASVSILAPKSLGQLVISASAMPRPSPAPLGSVLTPTSRDQKQLSPTSVGPKPALATSGLSLALASQEQPPQSPSSPSPVPSPVLSPSQEGHLAAASVTSTPASERQLPARQKDTAVPRPTPPADKCLYTPERAAGPATSPPRAQAFSDPRLSPSFRARPEAPRHSPEDPVLPPPPQTLPLDVSPGLPESGTRSPGLLSPTFRPGIPSSQTVPPPLPKPPRSPSRSPSRSPNRSPCLPPAPEVALPKPVTQAAGSGRCPSPNLQAQESPAAATTTTSPTSSWSAQPTCKSDPGFRITVVTWNVGTAMPPDDVTSLLHLGSGHDNDGADMIAIGLQEVNSMINKRLKDALFTDQWSELFMDALGPFNFVLVSTVRMQGVILLLFAKYYHLPFLRDVQTDCTRTGLGGYWGNKGGVSVRLAAFGHMLCFLNCHLPAHMDKAEQRKDNFQTILSLQQFQGPGAHGILDHDLVFWFGDLNFRIESYDLHFVKFAIDSNQLHQLWEKDQLNMAKNTWPILKGFQEGPLNFAPTFKFDVGTNKYDTSAKKRKPAWTDRILWKVKAPSGGPSPSGRESHRLQVTQHSYRSHMEYTVSDHKPVAAQFILQFAFRDDVPLVRLEVADEWARPEQAVVRYRVETVFARSSWDWIGLYRVGFRHCKDYVAYVWAKHEEVDGNIYQVTFSEESLPKGHGDFILGYYSHHHSILIGVTEPFQISLPTSESASSSTDSSGTSSEGEDDSTLELLAPKSRSPSPGKSKRHRSRSPGLARFPSLALHPSSRERRGGSRSPSPQSRQLPRVAPDRGHSSSSRGSSEEGPSGLPGPWAFPPSVPRSLGLLPALRLETVDPGGGGSWGADQEAPDPNSLSPSPQGRLGLEEGGLGP.

Disordered regions lie at residues 1 to 110 (MEGQ…AAKS) and 147 to 414 (AMPR…QPTC). An RSXSXX motif 1 motif is present at residues 6–11 (RSGSAR). The segment covering 11–24 (RPGTRTGLGPLPGT) has biased composition (low complexity). Arg56 is modified (asymmetric dimethylarginine; alternate). Position 56 is an omega-N-methylarginine; alternate (Arg56). Arg65 is modified (omega-N-methylarginine). Arg76 carries the asymmetric dimethylarginine modification. Residue Arg83 is modified to Asymmetric dimethylarginine; alternate. Residue Arg83 is modified to Omega-N-methylarginine; alternate. Over residues 160–174 (LTPTSRDQKQLSPTS) the composition is skewed to polar residues. Residue Ser171 is modified to Phosphoserine. Over residues 180–196 (ALATSGLSLALASQEQP) the composition is skewed to low complexity. Over residues 197–210 (PQSPSSPSPVPSPV) the composition is skewed to pro residues. The segment covering 284-294 (ARPEAPRHSPE) has biased composition (basic and acidic residues). Phosphoserine occurs at positions 292 and 325. A compositionally biased stretch (pro residues) spans 338-348 (VPPPLPKPPRS). The SH3-binding signature appears at 346 to 351 (PRSPSR). 2 stretches are compositionally biased toward low complexity: residues 349–361 (PSRS…NRSP) and 390–413 (QAQE…AQPT). The short motif at 351 to 356 (RSPSRS) is the RSXSXX motif 2 element. The catalytic stretch occupies residues 422–725 (ITVVTWNVGT…SDHKPVAAQF (304 aa)). Positions 726 to 837 (ILQFAFRDDV…IGVTEPFQIS (112 aa)) are required for ruffle localization. The tract at residues 839–1003 (PTSESASSST…LGLEEGGLGP (165 aa)) is disordered. A compositionally biased stretch (low complexity) spans 840 to 855 (TSESASSSTDSSGTSS). 2 short sequence motifs (RSXSXX motif) span residues 871 to 876 (RSPSPG) and 882 to 887 (RSRSPG). Phosphoserine is present on Ser900. Low complexity-rich tracts occupy residues 907–919 (SRSP…QLPR) and 927–943 (SSSS…GLPG). Residues 908–913 (RSPSPQ) carry the RSXSXX motif 5 motif. Position 987 is a phosphoserine (Ser987).

It belongs to the inositol 1,4,5-trisphosphate 5-phosphatase type II family.

It is found in the cytoplasm. It carries out the reaction 1D-myo-inositol 1,4,5-trisphosphate + H2O = 1D-myo-inositol 1,4-bisphosphate + phosphate. It catalyses the reaction 1D-myo-inositol 1,3,4,5-tetrakisphosphate + H2O = 1D-myo-inositol 1,3,4-trisphosphate + phosphate. The catalysed reaction is a 1,2-diacyl-sn-glycero-3-phospho-(1D-myo-inositol-4,5-bisphosphate) + H2O = a 1,2-diacyl-sn-glycero-3-phospho-(1D-myo-inositol 4-phosphate) + phosphate. Inositol 5-phosphatase, which converts inositol 1,4,5-trisphosphate to inositol 1,4-bisphosphate. Also converts phosphatidylinositol 4,5-bisphosphate to phosphatidylinositol 4-phosphate and inositol 1,3,4,5-tetrakisphosphate to inositol 1,3,4-trisphosphate in vitro. May be involved in modulation of the function of inositol and phosphatidylinositol polyphosphate-binding proteins that are present at membranes ruffles. The polypeptide is Phosphatidylinositol 4,5-bisphosphate 5-phosphatase A (Inpp5j) (Mus musculus (Mouse)).